The chain runs to 218 residues: Small ribosomal subunit protein uS3c (218 aa).

Residues 43-118 (IKNYVQKNMK…KLNISITRIE (76 aa)) form the KH type-2 domain.

It belongs to the universal ribosomal protein uS3 family. Part of the 30S ribosomal subunit.

It is found in the plastid. The protein localises to the chloroplast. The protein is Small ribosomal subunit protein uS3c (rps3) of Populus alba (White poplar).